Here is a 367-residue protein sequence, read N- to C-terminus: MTLKTLTATLVASLAFAPLAHADITIGLIAPLTGPVAAYGDQVKNGAQTAVDEINKKGGILGEKVVLELADDAGEPKQGVSAANKVVGDGIRFVVGPVTSGVAIPVSDVLAENGVLMVTPTATAPDLTKRGLTNVLRTCGRDDQQAEVAAKYVLKNFKDKRVAIVNDKGAYGKGLADAFKATLNAGGITEVVNDAITPGDKDFSALTTRIKSEKVDVVYFGGYHPEGGLLARQLHDLAANATIIGGDGLSNTEFWAIGTDAAGGTIFTNASDATKSPDSKAAADALAAKNIPAEAFTLNAYAAVEVLKAGIEKAGSAEDAEAVATALKDGKEIPTAIGKVTYGETGDLTSQSFSLYKWEAGKIVAAE.

Positions 1 to 22 (MTLKTLTATLVASLAFAPLAHA) are cleaved as a signal peptide.

It belongs to the leucine-binding protein family. In terms of assembly, the complex is composed of two ATP-binding proteins (BraF and BraG), two transmembrane proteins (BraD and BraE) and a solute-binding protein (BraC or BraC3).

It is found in the periplasm. Its function is as follows. Part of the ABC transporter complex BraDEFGC/C3 involved in transport of branched-chain amino acids Leu, Ile and Val (LIV). Essential for the development of bacteroids, the differentiated legume-symbiotic forms of this bacterium, and for the effective N(2) fixation by them. The chain is Leu/Ile/Val-binding protein BraC3 from Rhizobium johnstonii (strain DSM 114642 / LMG 32736 / 3841) (Rhizobium leguminosarum bv. viciae).